Reading from the N-terminus, the 812-residue chain is Axin-2 (812 aa).

Residues 1–43 (MNRTLTDPMVSSFREDDPRPPVPGEEGETTCHHPSKLAMMRPK) form a disordered region. Positions 84–203 (SLHFLLGDQD…LTSDIYLEYV (120 aa)) constitute an RGS domain. Disordered stretches follow at residues 275 to 326 (SYRR…AIPP), 388 to 430 (ETMS…TCEE), 446 to 484 (TPGC…SSMN), and 609 to 726 (RQTK…SGCH). Residues 285–303 (NRFTSGYSFAPATSANDSE) are compositionally biased toward polar residues. A compositionally biased stretch (low complexity) spans 305 to 323 (SSDALTDDSMSMTDSSVDA). The interval 329–415 (LGSKKQLQRE…RDESEMSSSS (87 aa)) is interaction with GSK3B. Residues 388–397 (ETMSSLEERL) show a composition bias toward basic and acidic residues. A compositionally biased stretch (acidic residues) spans 401–410 (QEEEERDESE). The segment covering 411-421 (MSSSSASHSLP) has biased composition (low complexity). The interaction with beta-catenin stretch occupies residues 415 to 467 (SASHSLPLLPPGTCEEDPQAILDEHLSRVLKTPGCQSPGLLRHSPRSRSPEQR). The span at 475–484 (STRSQSSSMN) shows a compositional bias: polar residues. The segment covering 672–683 (EEARRRLEEVSK) has biased composition (basic and acidic residues). A DIX domain is found at 730–812 (GSETVVTYFF…KILGKVDRMD (83 aa)).

As to quaternary structure, interacts with hwa; leading to promote the tankyrase-mediated degradation of axin1. Post-translationally, ADP-ribosylated by tankyrase tnks and tnks2. Poly-ADP-ribosylated protein is recognized by rnf146, followed by ubiquitination and subsequent activation of the Wnt signaling pathway. Ubiquitinated by rnf146 when poly-ADP-ribosylated, leading to its degradation and subsequent activation of the Wnt signaling pathway.

It is found in the cytoplasm. In terms of biological role, component of the beta-catenin destruction complex required for regulating ctnnb1 levels through phosphorylation and ubiquitination, and modulating Wnt-signaling. Controls dorsoventral patterning by down-regulating ctnnb1 to inhibit the Wnt signaling pathway and ventralize embryos. The sequence is that of Axin-2 (axin2) from Danio rerio (Zebrafish).